We begin with the raw amino-acid sequence, 236 residues long: SERTA domain-containing protein 1 (236 aa).

Residues 1–20 (MLSKGLKRKREEEEEKEPLA) are disordered. Positions 38–85 (PAVASSSLFDLSVLKLHHSLQQSEPDLRHLVLVVNTLRRIQASMAPAA) constitute an SERTA domain. A disordered region spans residues 189-211 (PASEGLKPGPEDGPGKEEAPELD). Over residues 197 to 207 (GPEDGPGKEEA) the composition is skewed to basic and acidic residues.

Interacts with the PHD-bromodomain of TIF1, TRIM28/TIF1B and p300/CBP. Interacts with E2F1 and TFDP1; modulates transactivation activity of TFDP1/E2F complexes. Also interacts with CDK4. Polyubiquitinated, which promotes proteasomal degradation.

Acts at E2F-responsive promoters as coregulator to integrate signals provided by PHD- and/or bromodomain-containing transcription factors. Stimulates E2F1/TFDP1 transcriptional activity. Renders the activity of cyclin D1/CDK4 resistant to the inhibitory effects of CDKN2A/p16INK4A. The sequence is that of SERTA domain-containing protein 1 (SERTAD1) from Homo sapiens (Human).